A 232-amino-acid polypeptide reads, in one-letter code: Clarin-2 (232 aa).

4 helical membrane passes run 8-28, 101-121, 139-159, and 188-208; these read VWYG…IVAL, ILLL…FAIL, LWNV…MAAV, and SFWI…VVAI.

Belongs to the clarin family. In terms of tissue distribution, detected in inner ear, particularly in hair bundles of auditory hair cells and is enriched in apical stereocilia. Detected in eye, but not in brain or muscle.

The protein localises to the cell projection. The protein resides in the stereocilium membrane. Its function is as follows. Plays a key role to hearing function. Required for normal organization and maintenance of the stereocilia bundle and for mechano-electrical transduction. This is Clarin-2 from Mus musculus (Mouse).